The sequence spans 233 residues: Phosphoribosylformylglycinamidine synthase subunit PurQ (233 aa).

The Glutamine amidotransferase type-1 domain maps to 3 to 233; it reads AAILVFPGIN…GLAQHLEKAA (231 aa). The active-site Nucleophile is Cys-87. Catalysis depends on residues His-204 and Glu-206.

Part of the FGAM synthase complex composed of 1 PurL, 1 PurQ and 2 PurS subunits.

It is found in the cytoplasm. The catalysed reaction is N(2)-formyl-N(1)-(5-phospho-beta-D-ribosyl)glycinamide + L-glutamine + ATP + H2O = 2-formamido-N(1)-(5-O-phospho-beta-D-ribosyl)acetamidine + L-glutamate + ADP + phosphate + H(+). It catalyses the reaction L-glutamine + H2O = L-glutamate + NH4(+). It participates in purine metabolism; IMP biosynthesis via de novo pathway; 5-amino-1-(5-phospho-D-ribosyl)imidazole from N(2)-formyl-N(1)-(5-phospho-D-ribosyl)glycinamide: step 1/2. Part of the phosphoribosylformylglycinamidine synthase complex involved in the purines biosynthetic pathway. Catalyzes the ATP-dependent conversion of formylglycinamide ribonucleotide (FGAR) and glutamine to yield formylglycinamidine ribonucleotide (FGAM) and glutamate. The FGAM synthase complex is composed of three subunits. PurQ produces an ammonia molecule by converting glutamine to glutamate. PurL transfers the ammonia molecule to FGAR to form FGAM in an ATP-dependent manner. PurS interacts with PurQ and PurL and is thought to assist in the transfer of the ammonia molecule from PurQ to PurL. The protein is Phosphoribosylformylglycinamidine synthase subunit PurQ of Bradyrhizobium diazoefficiens (strain JCM 10833 / BCRC 13528 / IAM 13628 / NBRC 14792 / USDA 110).